Here is a 207-residue protein sequence, read N- to C-terminus: Ras-related protein Rab7 (207 aa).

GTP contacts are provided by residues 15–22 (GDSGVGKT), 63–67 (DTAGQ), and 125–128 (NKID). Residues Cys205 and Cys207 are each lipidated (S-geranylgeranyl cysteine). Cysteine methyl ester is present on Cys207.

It belongs to the small GTPase superfamily. Rab family.

It localises to the cell membrane. Protein transport. Probably involved in vesicular traffic. The protein is Ras-related protein Rab7 of Prunus armeniaca (Apricot).